Consider the following 499-residue polypeptide: Serine/threonine-protein phosphatase 5 (499 aa).

A disordered region spans residues 1–23 (MAMAEGERTECAEPPRDEPPAEG). Alanine 2 carries the N-acetylalanine modification. TPR repeat units lie at residues 28-61 (AEEL…NPSN), 62-95 (AIYY…DKKY), and 96-129 (IKGY…KPND). The interval 200 to 499 (DQKKLHRKCA…ANTLLQLGMM (300 aa)) is catalytic. The Mg(2+) site is built by aspartate 242, histidine 244, and aspartate 271. Histidine 244 is a binding site for substrate. Substrate is bound by residues arginine 275 and 303-304 (NH). Residue asparagine 303 coordinates Mg(2+). Histidine 304 (proton donor/acceptor) is an active-site residue. Histidine 352 is a Mg(2+) binding site. Positions 400 and 427 each coordinate substrate. Position 427 (histidine 427) interacts with Mg(2+). The tract at residues 495–499 (QLGMM) is required for autoinhibition.

This sequence belongs to the PPP phosphatase family. PP-5 (PP-T) subfamily. As to quaternary structure, probably forms a complex composed of chaperones HSP90 and HSP70, co-chaperones STIP1/HOP, CDC37, PPP5C, PTGES3/p23, TSC1 and client protein TSC2. Probably forms a complex composed of chaperones HSP90 and HSP70, co-chaperones CDC37, PPP5C, TSC1 and client protein TSC2, CDK4, AKT, RAF1 and NR3C1; this complex does not contain co-chaperones STIP1/HOP and PTGES3/p23. Part of a complex with HSP90/HSP90AA1 and steroid receptors. Interacts (via TPR repeats) with HSP90AA1 (via TPR repeat-binding motif) or HSPA1A/HSPA1B; the interaction is direct and activates the phosphatase activity. Dissociates from HSPA1A/HSPA1B and HSP90AA1 in response to arachidonic acid. Interacts with CPNE1 (via VWFA domain). Interacts with CDC16, CDC27. Interacts with KLHDC10 (via the 6 Kelch repeats); inhibits the phosphatase activity on MAP3K5. Interacts with ATM and ATR; both interactions are induced by DNA damage and enhance ATM and ATR kinase activity. Interacts with RAD17; reduced by DNA damage. Interacts with nuclear receptors such as NR3C1/GCR and PPARG (activated by agonist); regulates their transactivation activities. Interacts (via TPR repeats) with S100 proteins S100A1, S100A2, S100A6, S100B and S100P; the interactions are calcium-dependent, strongly activate PPP5C phosphatase activity and compete with HSP90AA1 and MAP3K5 interactions. Interacts with SMAD2 and SMAD3 but not with SMAD1; decreases SMAD3 phosphorylation and protein levels. Interacts (via TPR repeats) with CRY1 and CRY2; the interaction with CRY2 down-regulates the phosphatase activity on CSNK1E. Interacts (via TPR repeats) with the active form of RAC1, GNA12 or GNA13; these interactions activate the phosphatase activity and translocate PPP5C to the cell membrane. Interacts with FLCN. The cofactor is Mg(2+). Requires Mn(2+) as cofactor. Activated by at least two different proteolytic cleavages producing a 56 kDa and a 50 kDa form. In terms of tissue distribution, predominantly found in brain and, in lower levels, in testis, but was nearly undetectable in spleen, lung, skeletal muscle, kidney and liver.

Its subcellular location is the nucleus. The protein localises to the cytoplasm. It localises to the cell membrane. The catalysed reaction is O-phospho-L-seryl-[protein] + H2O = L-seryl-[protein] + phosphate. The enzyme catalyses O-phospho-L-threonyl-[protein] + H2O = L-threonyl-[protein] + phosphate. Its activity is regulated as follows. Autoinhibited. In the autoinhibited state, the TPR domain interacts with the catalytic region and prevents substrate access to the catalytic pocket. Allosterically activated by various polyunsaturated fatty acids, free long-chain fatty-acids and long-chain fatty acyl-CoA esters, arachidonic acid being the most effective activator. HSP90A and probably RAC1, GNA12 and GNA13 can also release the autoinhibition by the TPR repeat. Activation by RAC1, GNA12 and GNA13 is synergistic with the one produced by fatty acids binding. Inhibited by okadaic acid. In terms of biological role, serine/threonine-protein phosphatase that dephosphorylates a myriad of proteins involved in different signaling pathways including the kinases CSNK1E, ASK1/MAP3K5, PRKDC and RAF1, the nuclear receptors NR3C1, PPARG, ESR1 and ESR2, SMAD proteins and TAU/MAPT. Implicated in wide ranging cellular processes, including apoptosis, differentiation, DNA damage response, cell survival, regulation of ion channels or circadian rhythms, in response to steroid and thyroid hormones, calcium, fatty acids, TGF-beta as well as oxidative and genotoxic stresses. Participates in the control of DNA damage response mechanisms such as checkpoint activation and DNA damage repair through, for instance, the regulation ATM/ATR-signaling and dephosphorylation of PRKDC and TP53BP1. Inhibits ASK1/MAP3K5-mediated apoptosis induced by oxidative stress. Plays a positive role in adipogenesis, mainly through the dephosphorylation and activation of PPARG transactivation function. Also dephosphorylates and inhibits the anti-adipogenic effect of NR3C1. Regulates the circadian rhythms, through the dephosphorylation and activation of CSNK1E. May modulate TGF-beta signaling pathway by the regulation of SMAD3 phosphorylation and protein expression levels. Dephosphorylates and may play a role in the regulation of TAU/MAPT. Through their dephosphorylation, may play a role in the regulation of ions channels such as KCNH2. Dephosphorylate FNIP1, disrupting interaction with HSP90AA1/Hsp90. This is Serine/threonine-protein phosphatase 5 (Ppp5c) from Rattus norvegicus (Rat).